Reading from the N-terminus, the 285-residue chain is Shikimate dehydrogenase (NADP(+)) (285 aa).

Shikimate-binding positions include 19-21 (SLS) and T66. The Proton acceptor role is filled by K70. N91 and D107 together coordinate shikimate. Residues 129 to 133 (GSGGA) and L228 each bind NADP(+). Position 230 (Y230) interacts with shikimate. Residue G251 participates in NADP(+) binding.

Belongs to the shikimate dehydrogenase family. Homodimer.

The enzyme catalyses shikimate + NADP(+) = 3-dehydroshikimate + NADPH + H(+). It functions in the pathway metabolic intermediate biosynthesis; chorismate biosynthesis; chorismate from D-erythrose 4-phosphate and phosphoenolpyruvate: step 4/7. In terms of biological role, involved in the biosynthesis of the chorismate, which leads to the biosynthesis of aromatic amino acids. Catalyzes the reversible NADPH linked reduction of 3-dehydroshikimate (DHSA) to yield shikimate (SA). This is Shikimate dehydrogenase (NADP(+)) from Prochlorococcus marinus subsp. pastoris (strain CCMP1986 / NIES-2087 / MED4).